A 137-amino-acid chain; its full sequence is Nucleoside diphosphate kinase (137 aa).

Residues K10, F58, R86, T92, R103, and N113 each contribute to the ATP site. The active-site Pros-phosphohistidine intermediate is H116.

The protein belongs to the NDK family. In terms of assembly, homotetramer. It depends on Mg(2+) as a cofactor.

The protein localises to the cytoplasm. The enzyme catalyses a 2'-deoxyribonucleoside 5'-diphosphate + ATP = a 2'-deoxyribonucleoside 5'-triphosphate + ADP. The catalysed reaction is a ribonucleoside 5'-diphosphate + ATP = a ribonucleoside 5'-triphosphate + ADP. Its function is as follows. Major role in the synthesis of nucleoside triphosphates other than ATP. The ATP gamma phosphate is transferred to the NDP beta phosphate via a ping-pong mechanism, using a phosphorylated active-site intermediate. This Helicobacter pylori (strain ATCC 700392 / 26695) (Campylobacter pylori) protein is Nucleoside diphosphate kinase.